Reading from the N-terminus, the 277-residue chain is Glycerol-3-phosphate acyltransferase (277 aa).

A run of 5 helical transmembrane segments spans residues 3–23 (LFIF…AIIV), 55–75 (IMVM…AKLL), 79–99 (PVTV…PVFF), 111–131 (IGAL…TWLL), and 155–175 (LILV…ILVL). A disordered region spans residues 207 to 277 (SPATSAEQEF…PKTKTVKEKE (71 aa)). A compositionally biased stretch (basic and acidic residues) spans 216–239 (FPGKEVIDTNIDETEKTEQAEAVK). Composition is skewed to basic residues over residues 240-253 (KPKV…AKKT) and 262-271 (KPKSTKPKTK).

It belongs to the PlsY family. In terms of assembly, probably interacts with PlsX.

The protein localises to the cell inner membrane. The catalysed reaction is an acyl phosphate + sn-glycerol 3-phosphate = a 1-acyl-sn-glycero-3-phosphate + phosphate. The protein operates within lipid metabolism; phospholipid metabolism. Functionally, catalyzes the transfer of an acyl group from acyl-phosphate (acyl-PO(4)) to glycerol-3-phosphate (G3P) to form lysophosphatidic acid (LPA). This enzyme utilizes acyl-phosphate as fatty acyl donor, but not acyl-CoA or acyl-ACP. The protein is Glycerol-3-phosphate acyltransferase of Legionella pneumophila (strain Corby).